We begin with the raw amino-acid sequence, 307 residues long: tRNA pseudouridine synthase B (307 aa).

Catalysis depends on D38, which acts as the Nucleophile.

The protein belongs to the pseudouridine synthase TruB family. Type 1 subfamily.

It carries out the reaction uridine(55) in tRNA = pseudouridine(55) in tRNA. In terms of biological role, responsible for synthesis of pseudouridine from uracil-55 in the psi GC loop of transfer RNAs. This Bacillus thuringiensis (strain Al Hakam) protein is tRNA pseudouridine synthase B.